The sequence spans 264 residues: 3-methyl-2-oxobutanoate hydroxymethyltransferase (264 aa).

Mg(2+) contacts are provided by D45 and D84. 3-methyl-2-oxobutanoate is bound by residues 45-46 (DS), D84, and K112. E114 contacts Mg(2+). Residue E181 is the Proton acceptor of the active site.

It belongs to the PanB family. In terms of assembly, homodecamer; pentamer of dimers. Requires Mg(2+) as cofactor.

The protein localises to the cytoplasm. The catalysed reaction is 3-methyl-2-oxobutanoate + (6R)-5,10-methylene-5,6,7,8-tetrahydrofolate + H2O = 2-dehydropantoate + (6S)-5,6,7,8-tetrahydrofolate. Its pathway is cofactor biosynthesis; (R)-pantothenate biosynthesis; (R)-pantoate from 3-methyl-2-oxobutanoate: step 1/2. In terms of biological role, catalyzes the reversible reaction in which hydroxymethyl group from 5,10-methylenetetrahydrofolate is transferred onto alpha-ketoisovalerate to form ketopantoate. The sequence is that of 3-methyl-2-oxobutanoate hydroxymethyltransferase from Aeromonas hydrophila subsp. hydrophila (strain ATCC 7966 / DSM 30187 / BCRC 13018 / CCUG 14551 / JCM 1027 / KCTC 2358 / NCIMB 9240 / NCTC 8049).